The sequence spans 383 residues: Dual-specificity RNA methyltransferase RlmN (383 aa).

Glu95 serves as the catalytic Proton acceptor. The Radical SAM core domain occupies 101 to 349; the sequence is EETRGTLCVS…TTVRKTRGDD (249 aa). Cys108 and Cys354 are oxidised to a cystine. Cys115, Cys119, and Cys122 together coordinate [4Fe-4S] cluster. Residues 180–181, Ser212, 234–236, and Asn311 contribute to the S-adenosyl-L-methionine site; these read GE and SLH. The active-site S-methylcysteine intermediate is Cys354.

It belongs to the radical SAM superfamily. RlmN family. [4Fe-4S] cluster is required as a cofactor.

Its subcellular location is the cytoplasm. The enzyme catalyses adenosine(2503) in 23S rRNA + 2 reduced [2Fe-2S]-[ferredoxin] + 2 S-adenosyl-L-methionine = 2-methyladenosine(2503) in 23S rRNA + 5'-deoxyadenosine + L-methionine + 2 oxidized [2Fe-2S]-[ferredoxin] + S-adenosyl-L-homocysteine. The catalysed reaction is adenosine(37) in tRNA + 2 reduced [2Fe-2S]-[ferredoxin] + 2 S-adenosyl-L-methionine = 2-methyladenosine(37) in tRNA + 5'-deoxyadenosine + L-methionine + 2 oxidized [2Fe-2S]-[ferredoxin] + S-adenosyl-L-homocysteine. In terms of biological role, specifically methylates position 2 of adenine 2503 in 23S rRNA and position 2 of adenine 37 in tRNAs. m2A2503 modification seems to play a crucial role in the proofreading step occurring at the peptidyl transferase center and thus would serve to optimize ribosomal fidelity. In Paraburkholderia phytofirmans (strain DSM 17436 / LMG 22146 / PsJN) (Burkholderia phytofirmans), this protein is Dual-specificity RNA methyltransferase RlmN.